Here is a 326-residue protein sequence, read N- to C-terminus: D-allose transport system permease protein AlsC (326 aa).

Residues 1-18 (MGFTTRVKSEASEKKPFN) are Cytoplasmic-facing. Residues 19–39 (FALFWDKYGTFFILAIIVAIF) form a helical membrane-spanning segment. Residues 40–70 (GSLSPEYFLTTNNITQIFVQSSVTVLIGMGE) lie on the Periplasmic side of the membrane. A helical membrane pass occupies residues 71–91 (FFAILVAGIDLSVGAILALSG). Over 92-101 (MVTAKLMLAG) the chain is Cytoplasmic. Residues 102–122 (VDPFLAAMIGGVLVGGALGAI) traverse the membrane as a helical segment. Over 123-124 (NG) the chain is Periplasmic. Residues 125–145 (CLVNWTGLHPFIITLGTNAIF) traverse the membrane as a helical segment. The Cytoplasmic portion of the chain corresponds to 146 to 149 (RGIT). Residues 150-170 (LVISDANSVYGFSFDFVNFFA) form a helical membrane-spanning segment. Residues 171 to 172 (AS) are Periplasmic-facing. A helical transmembrane segment spans residues 173 to 193 (VIGIPVPVIFSLIVALILWFL). Residues 194–221 (TTRMRLGRNIYALGGNKNSAFYSGIDVK) are Cytoplasmic-facing. The helical transmembrane segment at 222–242 (FHILVVFIISGVCAGLAGVVS) threads the bilayer. Residues 243–252 (TARLGAAEPL) lie on the Periplasmic side of the membrane. A helical transmembrane segment spans residues 253–273 (AGMGFETYAIASAIIGGTSFF). The Cytoplasmic portion of the chain corresponds to 274–278 (GGKGR). Helical transmembrane passes span 279 to 299 (IFSV…LNIL) and 300 to 320 (QVQT…AVAL). Over 321–326 (DRLISK) the chain is Cytoplasmic.

It belongs to the binding-protein-dependent transport system permease family. AraH/RbsC subfamily.

Its subcellular location is the cell inner membrane. Its function is as follows. Part of the binding-protein-dependent transport system AlsBAC for D-allose; probably responsible for the translocation of the substrate across the membrane. The protein is D-allose transport system permease protein AlsC (alsC) of Escherichia coli (strain K12).